Consider the following 812-residue polypeptide: DNA gyrase subunit A (812 aa).

Residues 31 to 496 (IPDVRDGLKP…GNTDFNVEDV (466 aa)) form the Topo IIA-type catalytic domain. Tyrosine 119 functions as the O-(5'-phospho-DNA)-tyrosine intermediate in the catalytic mechanism. The GyrA-box signature appears at 523–529 (QGRGGKG).

The protein belongs to the type II topoisomerase GyrA/ParC subunit family. Heterotetramer, composed of two GyrA and two GyrB chains. In the heterotetramer, GyrA contains the active site tyrosine that forms a transient covalent intermediate with DNA, while GyrB binds cofactors and catalyzes ATP hydrolysis.

It is found in the cytoplasm. The enzyme catalyses ATP-dependent breakage, passage and rejoining of double-stranded DNA.. In terms of biological role, a type II topoisomerase that negatively supercoils closed circular double-stranded (ds) DNA in an ATP-dependent manner to modulate DNA topology and maintain chromosomes in an underwound state. Negative supercoiling favors strand separation, and DNA replication, transcription, recombination and repair, all of which involve strand separation. Also able to catalyze the interconversion of other topological isomers of dsDNA rings, including catenanes and knotted rings. Type II topoisomerases break and join 2 DNA strands simultaneously in an ATP-dependent manner. This Kosmotoga olearia (strain ATCC BAA-1733 / DSM 21960 / TBF 19.5.1) protein is DNA gyrase subunit A.